The primary structure comprises 141 residues: Large ribosomal subunit protein bL17 (141 aa).

This sequence belongs to the bacterial ribosomal protein bL17 family. Part of the 50S ribosomal subunit. Contacts protein L32.

This is Large ribosomal subunit protein bL17 from Rhizobium meliloti (strain 1021) (Ensifer meliloti).